The primary structure comprises 206 residues: Guanylate kinase (206 aa).

Residues 6 to 184 (GTLYIISAPS…ALGDLKAIFR (179 aa)) enclose the Guanylate kinase-like domain. 13-20 (APSGAGKS) serves as a coordination point for ATP.

This sequence belongs to the guanylate kinase family.

The protein resides in the cytoplasm. It carries out the reaction GMP + ATP = GDP + ADP. Essential for recycling GMP and indirectly, cGMP. The sequence is that of Guanylate kinase from Pseudomonas fluorescens (strain ATCC BAA-477 / NRRL B-23932 / Pf-5).